A 142-amino-acid polypeptide reads, in one-letter code: Large ribosomal subunit protein uL11 (142 aa).

This sequence belongs to the universal ribosomal protein uL11 family. As to quaternary structure, part of the ribosomal stalk of the 50S ribosomal subunit. Interacts with L10 and the large rRNA to form the base of the stalk. L10 forms an elongated spine to which L12 dimers bind in a sequential fashion forming a multimeric L10(L12)X complex. Post-translationally, one or more lysine residues are methylated.

Its function is as follows. Forms part of the ribosomal stalk which helps the ribosome interact with GTP-bound translation factors. This Haemophilus influenzae (strain 86-028NP) protein is Large ribosomal subunit protein uL11.